Reading from the N-terminus, the 336-residue chain is Transmembrane protease serine 12 (336 aa).

A signal peptide spans 1 to 18 (MASWALSAALLCLGGAFA). At 19–312 (YSELHSLSLR…HYLSQGNINR (294 aa)) the chain is on the extracellular side. Positions 66-306 (IIGGSQADTG…FQEWMTHYLS (241 aa)) constitute a Peptidase S1 domain. An intrachain disulfide couples Cys95 to Cys111. Catalysis depends on charge relay system residues His110 and Asp159. Intrachain disulfides connect Cys194-Cys262, Cys225-Cys241, and Cys252-Cys282. 3 N-linked (GlcNAc...) asparagine glycosylation sites follow: Asn207, Asn237, and Asn246. The active-site Charge relay system is Ser256. The helical transmembrane segment at 313–333 (LFNMDIVLGQVLTALGSVILL) threads the bilayer. Residues 334 to 336 (GVT) lie on the Cytoplasmic side of the membrane.

This sequence belongs to the peptidase S1 family. As to expression, exclusively expressed in the testis, from spermatocytes to elongated spermatids (at protein level).

The protein localises to the cell membrane. It localises to the cytoplasmic vesicle. Its subcellular location is the secretory vesicle. The protein resides in the acrosome. In terms of biological role, required for male fertility. Plays a critical role in sperm capacitation and acrosome reactions during fertilization, and also plays a role in the regulation of proteins involved in spermatogenesis. Regulates protein pathways that promote chromosomal synapsis formation, double-strand break repair, formation of the inner mitochondrial membrane cristae and apoptosis in developing sperm. Required for normal sperm motility and binding to the zona pellucida, potentially via a role in ADAM3 protein maturation. This is Transmembrane protease serine 12 from Mus musculus (Mouse).